The sequence spans 425 residues: Glutamate-1-semialdehyde 2,1-aminomutase (425 aa).

Lys-265 carries the post-translational modification N6-(pyridoxal phosphate)lysine.

The protein belongs to the class-III pyridoxal-phosphate-dependent aminotransferase family. HemL subfamily. In terms of assembly, homodimer. Requires pyridoxal 5'-phosphate as cofactor.

The protein resides in the cytoplasm. It catalyses the reaction (S)-4-amino-5-oxopentanoate = 5-aminolevulinate. It functions in the pathway porphyrin-containing compound metabolism; protoporphyrin-IX biosynthesis; 5-aminolevulinate from L-glutamyl-tRNA(Glu): step 2/2. This chain is Glutamate-1-semialdehyde 2,1-aminomutase, found in Clostridium perfringens (strain SM101 / Type A).